Here is a 104-residue protein sequence, read N- to C-terminus: Protein MHF2 homolog (104 aa).

Belongs to the CENP-X/MHF2 family.

The protein resides in the nucleus. Acts in the same pathway as FANCM to restrain class II meiotic crossing over (CO), and acts with FANCM during meiosis to repair interstrand cross-links (ICLs). The sequence is that of Protein MHF2 homolog from Arabidopsis thaliana (Mouse-ear cress).